A 140-amino-acid polypeptide reads, in one-letter code: Nucleoside diphosphate kinase (140 aa).

Residues Lys11, Phe59, Arg87, Thr93, Arg104, and Asn114 each coordinate ATP. The active-site Pros-phosphohistidine intermediate is the His117.

The protein belongs to the NDK family. In terms of assembly, homotetramer. It depends on Mg(2+) as a cofactor.

It localises to the cytoplasm. It catalyses the reaction a 2'-deoxyribonucleoside 5'-diphosphate + ATP = a 2'-deoxyribonucleoside 5'-triphosphate + ADP. The enzyme catalyses a ribonucleoside 5'-diphosphate + ATP = a ribonucleoside 5'-triphosphate + ADP. Its function is as follows. Major role in the synthesis of nucleoside triphosphates other than ATP. The ATP gamma phosphate is transferred to the NDP beta phosphate via a ping-pong mechanism, using a phosphorylated active-site intermediate. In Francisella philomiragia subsp. philomiragia (strain ATCC 25017 / CCUG 19701 / FSC 153 / O#319-036), this protein is Nucleoside diphosphate kinase.